Reading from the N-terminus, the 238-residue chain is Ribosomal RNA small subunit methyltransferase G (238 aa).

S-adenosyl-L-methionine-binding positions include Gly79, Phe84, 102–104, 130–131, and Arg149; these read EAT and IE.

It belongs to the methyltransferase superfamily. RNA methyltransferase RsmG family.

It localises to the cytoplasm. Functionally, specifically methylates the N7 position of a guanine in 16S rRNA. The sequence is that of Ribosomal RNA small subunit methyltransferase G from Chloroflexus aggregans (strain MD-66 / DSM 9485).